Consider the following 622-residue polypeptide: 1-deoxy-D-xylulose-5-phosphate synthase (622 aa).

Residues histidine 80 and 121 to 123 (GHS) contribute to the thiamine diphosphate site. Residue aspartate 152 participates in Mg(2+) binding. Thiamine diphosphate is bound by residues 153-154 (GA), asparagine 181, tyrosine 288, and glutamate 370. Mg(2+) is bound at residue asparagine 181.

The protein belongs to the transketolase family. DXPS subfamily. As to quaternary structure, homodimer. Mg(2+) is required as a cofactor. Requires thiamine diphosphate as cofactor.

It carries out the reaction D-glyceraldehyde 3-phosphate + pyruvate + H(+) = 1-deoxy-D-xylulose 5-phosphate + CO2. It participates in metabolic intermediate biosynthesis; 1-deoxy-D-xylulose 5-phosphate biosynthesis; 1-deoxy-D-xylulose 5-phosphate from D-glyceraldehyde 3-phosphate and pyruvate: step 1/1. In terms of biological role, catalyzes the acyloin condensation reaction between C atoms 2 and 3 of pyruvate and glyceraldehyde 3-phosphate to yield 1-deoxy-D-xylulose-5-phosphate (DXP). In Shewanella amazonensis (strain ATCC BAA-1098 / SB2B), this protein is 1-deoxy-D-xylulose-5-phosphate synthase.